A 251-amino-acid polypeptide reads, in one-letter code: Flagellar basal-body rod protein FlgF (251 aa).

Belongs to the flagella basal body rod proteins family. As to quaternary structure, the basal body constitutes a major portion of the flagellar organelle and consists of five rings (E,L,P,S, and M) mounted on a central rod. The rod consists of about 26 subunits of FlgG in the distal portion, and FlgB, FlgC and FlgF are thought to build up the proximal portion of the rod with about 6 subunits each.

The protein localises to the bacterial flagellum basal body. This chain is Flagellar basal-body rod protein FlgF (flgF), found in Escherichia coli (strain K12).